The primary structure comprises 77 residues: Acyl carrier protein (77 aa).

One can recognise a Carrier domain in the interval 2–77 (SSIEKRVKEI…DAIDYITEHT (76 aa)). O-(pantetheine 4'-phosphoryl)serine is present on serine 37.

Belongs to the acyl carrier protein (ACP) family. 4'-phosphopantetheine is transferred from CoA to a specific serine of apo-ACP by AcpS. This modification is essential for activity because fatty acids are bound in thioester linkage to the sulfhydryl of the prosthetic group.

The protein resides in the cytoplasm. It functions in the pathway lipid metabolism; fatty acid biosynthesis. Carrier of the growing fatty acid chain in fatty acid biosynthesis. The polypeptide is Acyl carrier protein (Geobacter sulfurreducens (strain ATCC 51573 / DSM 12127 / PCA)).